The following is a 393-amino-acid chain: Beta-1,3-galactosyltransferase 7 (393 aa).

A helical; Signal-anchor for type II membrane protein membrane pass occupies residues valine 9 to phenylalanine 29. The segment at serine 89 to threonine 112 is disordered. A compositionally biased stretch (low complexity) spans serine 93–serine 103.

It belongs to the glycosyltransferase 31 family. It depends on Mn(2+) as a cofactor. As to expression, expressed in leaves, stems, flowers and siliques.

The protein resides in the golgi apparatus membrane. It participates in protein modification; protein glycosylation. In terms of biological role, beta-1,3-galactosyltransferase that transfers galactose from UDP-galactose to substrates with a terminal glycosyl residue. This chain is Beta-1,3-galactosyltransferase 7 (B3GALT7), found in Arabidopsis thaliana (Mouse-ear cress).